The following is a 789-amino-acid chain: Mitochondrial inner membrane m-AAA protease component AFG3L1 (789 aa).

The N-terminal 70 residues, 1-70, are a transit peptide targeting the mitochondrion; sequence MLLRLVGAAG…KLTSFSPRLY (70 aa). Positions 81-121 are disordered; that stretch reads FKNKKNRKSASPGNSVPPKKEPKNAGPGGDGGNRGGKGDDF. Gly residues predominate over residues 106–115; it reads GPGGDGGNRG. The next 2 membrane-spanning stretches (helical) occupy residues 139–158 and 246–264; these read FRSL…YFYF and FLRS…LYAM. Positions 302, 303, 344, 345, 346, 347, 348, and 482 each coordinate ATP. Residue H566 participates in Zn(2+) binding. E567 is a catalytic residue. Positions 570 and 641 each coordinate Zn(2+). Positions 749–789 are disordered; sequence EEFVEGTGSLEEDTSLPEGLKDWNKGREEGGTERGLQESPV. Basic and acidic residues predominate over residues 767 to 789; that stretch reads GLKDWNKGREEGGTERGLQESPV.

In the N-terminal section; belongs to the AAA ATPase family. It in the C-terminal section; belongs to the peptidase M41 family. Homooligomer. Forms heterohexamers with Spg7 and Afg3l1. The m-AAA protease is either composed of homohexamers of Afg3l2 or heterohexamers of Afg3l1, Afg3l2 and/or Spg7. Zn(2+) is required as a cofactor.

The protein resides in the mitochondrion inner membrane. The enzyme catalyses ATP + H2O = ADP + phosphate + H(+). Catalytic component of the m-AAA protease, a protease that plays a key role in proteostasis of inner mitochondrial membrane proteins, and which is essential for axonal and neuron development. Afg3l1 possesses both ATPase and protease activities: the ATPase activity is required to unfold substrates, threading them into the internal proteolytic cavity for hydrolysis into small peptide fragments. The m-AAA protease exerts a dual role in the mitochondrial inner membrane: it mediates the processing of specific regulatory proteins and ensures protein quality control by degrading misfolded polypeptides. Required for SPG7 maturation into its active mature form after SPG7 cleavage by mitochondrial-processing peptidase (MPP). The sequence is that of Mitochondrial inner membrane m-AAA protease component AFG3L1 from Mus musculus (Mouse).